Here is a 445-residue protein sequence, read N- to C-terminus: Putative serpin-Z5 (445 aa).

The interval 356–380 (GTEAAASAINMVCGMSMTPEPRPVP) is RCL.

This sequence belongs to the serpin family.

Its function is as follows. Probable serine protease inhibitor. This chain is Putative serpin-Z5, found in Oryza sativa subsp. japonica (Rice).